We begin with the raw amino-acid sequence, 282 residues long: ATP synthase gamma chain (282 aa).

The protein belongs to the ATPase gamma chain family. As to quaternary structure, F-type ATPases have 2 components, CF(1) - the catalytic core - and CF(0) - the membrane proton channel. CF(1) has five subunits: alpha(3), beta(3), gamma(1), delta(1), epsilon(1). CF(0) has three main subunits: a, b and c.

It localises to the cell membrane. In terms of biological role, produces ATP from ADP in the presence of a proton gradient across the membrane. The gamma chain is believed to be important in regulating ATPase activity and the flow of protons through the CF(0) complex. The protein is ATP synthase gamma chain of Clostridium botulinum (strain Okra / Type B1).